We begin with the raw amino-acid sequence, 331 residues long: MVSSTSELITQPVNREEVVPSRKRIKLPAWLEVVKPRLIPLLLATTVGGMALSEEWPLPSPRLACTLGGGALAAAAAGALNCLWEQDLDKRMKRTSNRALPSGRLSQSSVFIGAVACTLVSSALLVSGVNCLAAGLTLLGLCSYVLLYTAFLKPRTSQNIVFGGVAGAIPPLVGASAAAGHIGLGGWWLFSLVMVWTPAHFWALAILLKEDYRSVGIPMLPTVSGPFVTAKAISVYGYLTVFLSFLGCFVLPEGGLLYGILLLPYNSRLLQLVSRLRDNPEDLDRAKGLFRWSILYMFGVCFLLVISRLQVSIVFNDQLIALIKDFSTGFS.

Transmembrane regions (helical) follow at residues 63 to 83 (LACT…LNCL), 109 to 129 (SVFI…VSGV), 132 to 152 (LAAG…TAFL), 160 to 180 (IVFG…AAAG), 188 to 208 (WLFS…AILL), 215 to 235 (VGIP…AISV), 241 to 261 (VFLS…YGIL), and 294 to 314 (ILYM…VSIV).

The protein belongs to the UbiA prenyltransferase family. Protoheme IX farnesyltransferase subfamily.

It is found in the cell inner membrane. It carries out the reaction heme b + (2E,6E)-farnesyl diphosphate + H2O = Fe(II)-heme o + diphosphate. It participates in porphyrin-containing compound metabolism; heme O biosynthesis; heme O from protoheme: step 1/1. In terms of biological role, converts heme B (protoheme IX) to heme O by substitution of the vinyl group on carbon 2 of heme B porphyrin ring with a hydroxyethyl farnesyl side group. In Prochlorococcus marinus (strain NATL2A), this protein is Protoheme IX farnesyltransferase.